Here is a 212-residue protein sequence, read N- to C-terminus: Probable nicotinate-nucleotide adenylyltransferase (212 aa).

Belongs to the NadD family.

It catalyses the reaction nicotinate beta-D-ribonucleotide + ATP + H(+) = deamido-NAD(+) + diphosphate. It functions in the pathway cofactor biosynthesis; NAD(+) biosynthesis; deamido-NAD(+) from nicotinate D-ribonucleotide: step 1/1. Its function is as follows. Catalyzes the reversible adenylation of nicotinate mononucleotide (NaMN) to nicotinic acid adenine dinucleotide (NaAD). This Chromobacterium violaceum (strain ATCC 12472 / DSM 30191 / JCM 1249 / CCUG 213 / NBRC 12614 / NCIMB 9131 / NCTC 9757 / MK) protein is Probable nicotinate-nucleotide adenylyltransferase.